The following is a 306-amino-acid chain: MYILSIETSCDDTSVAILEDNKVLSCIIKNDSKQLNPFGGIVPEIVARYHEENIIKALDLALQESNISLNQIDKVAYTNQPGLPGSLFVGEIFAKTMAYALDVECVPINHIHGHILSPFINSVPKYPFMSLIASGKTTSIFLVKSANEIIELTKTRDDAIGEIFDKVGKALGYDYPAGPKLDKYFDISKATITPSFPPVKNDFSFSGIKNKFLSIINSSKMKNEEIDTITIGSSFLKYSIDLIIKKLKYYKDEYSVDCVCIGGGVANNNYFKQEIKKLFSDSFVPESKYSTDNAAMIGFAYYEKNK.

Residues H110 and H114 each coordinate Fe cation. Substrate contacts are provided by residues I132 to K136, D165, G178, D182, and N268. D292 serves as a coordination point for Fe cation.

It belongs to the KAE1 / TsaD family. It depends on Fe(2+) as a cofactor.

It is found in the cytoplasm. The enzyme catalyses L-threonylcarbamoyladenylate + adenosine(37) in tRNA = N(6)-L-threonylcarbamoyladenosine(37) in tRNA + AMP + H(+). Required for the formation of a threonylcarbamoyl group on adenosine at position 37 (t(6)A37) in tRNAs that read codons beginning with adenine. Is involved in the transfer of the threonylcarbamoyl moiety of threonylcarbamoyl-AMP (TC-AMP) to the N6 group of A37, together with TsaE and TsaB. TsaD likely plays a direct catalytic role in this reaction. This chain is tRNA N6-adenosine threonylcarbamoyltransferase, found in Malacoplasma penetrans (strain HF-2) (Mycoplasma penetrans).